Consider the following 139-residue polypeptide: D-ribose pyranase (139 aa).

The active-site Proton donor is H20. Residues D28, H106, and 128–130 (YAN) each bind substrate.

The protein belongs to the RbsD / FucU family. RbsD subfamily. As to quaternary structure, homodecamer.

The protein localises to the cytoplasm. It catalyses the reaction beta-D-ribopyranose = beta-D-ribofuranose. It functions in the pathway carbohydrate metabolism; D-ribose degradation; D-ribose 5-phosphate from beta-D-ribopyranose: step 1/2. Its function is as follows. Catalyzes the interconversion of beta-pyran and beta-furan forms of D-ribose. In Escherichia coli O139:H28 (strain E24377A / ETEC), this protein is D-ribose pyranase.